The primary structure comprises 269 residues: Formamidopyrimidine-DNA glycosylase (269 aa).

The active-site Schiff-base intermediate with DNA is the proline 2. The Proton donor role is filled by glutamate 3. Residue lysine 57 is the Proton donor; for beta-elimination activity of the active site. Positions 90, 109, and 150 each coordinate DNA. Residues 235–269 (LVYGKAGEPCPECGEPLQELKIGQRNTFFCNECQQ) form an FPG-type zinc finger. The active-site Proton donor; for delta-elimination activity is arginine 259.

It belongs to the FPG family. In terms of assembly, monomer. Zn(2+) serves as cofactor.

It catalyses the reaction Hydrolysis of DNA containing ring-opened 7-methylguanine residues, releasing 2,6-diamino-4-hydroxy-5-(N-methyl)formamidopyrimidine.. The catalysed reaction is 2'-deoxyribonucleotide-(2'-deoxyribose 5'-phosphate)-2'-deoxyribonucleotide-DNA = a 3'-end 2'-deoxyribonucleotide-(2,3-dehydro-2,3-deoxyribose 5'-phosphate)-DNA + a 5'-end 5'-phospho-2'-deoxyribonucleoside-DNA + H(+). Its function is as follows. Involved in base excision repair of DNA damaged by oxidation or by mutagenic agents. Acts as a DNA glycosylase that recognizes and removes damaged bases. Has a preference for oxidized purines, such as 7,8-dihydro-8-oxoguanine (8-oxoG). Has AP (apurinic/apyrimidinic) lyase activity and introduces nicks in the DNA strand. Cleaves the DNA backbone by beta-delta elimination to generate a single-strand break at the site of the removed base with both 3'- and 5'-phosphates. The protein is Formamidopyrimidine-DNA glycosylase of Vibrio parahaemolyticus serotype O3:K6 (strain RIMD 2210633).